A 347-amino-acid polypeptide reads, in one-letter code: Protein-glutamate methylesterase/protein-glutamine glutaminase 4 (347 aa).

Residues 3–121 (KVLIVDDSAS…HPNHEREARS (119 aa)) form the Response regulatory domain. Asp54 is subject to 4-aspartylphosphate. The CheB-type methylesterase domain maps to 157 to 342 (PARLKAVAIG…PDRIVTALTS (186 aa)). Residues Ser168, His195, and Asp289 contribute to the active site.

It belongs to the CheB family. Post-translationally, phosphorylated by CheA. Phosphorylation of the N-terminal regulatory domain activates the methylesterase activity.

The protein resides in the cytoplasm. It carries out the reaction [protein]-L-glutamate 5-O-methyl ester + H2O = L-glutamyl-[protein] + methanol + H(+). It catalyses the reaction L-glutaminyl-[protein] + H2O = L-glutamyl-[protein] + NH4(+). Functionally, involved in chemotaxis. Part of a chemotaxis signal transduction system that modulates chemotaxis in response to various stimuli. Catalyzes the demethylation of specific methylglutamate residues introduced into the chemoreceptors (methyl-accepting chemotaxis proteins or MCP) by CheR. Also mediates the irreversible deamidation of specific glutamine residues to glutamic acid. The polypeptide is Protein-glutamate methylesterase/protein-glutamine glutaminase 4 (Geobacter metallireducens (strain ATCC 53774 / DSM 7210 / GS-15)).